Consider the following 365-residue polypeptide: D-alanine--D-alanine ligase (365 aa).

Residues 140 to 346 (KKILRRHGLQ…YSQLLTDLIY (207 aa)) enclose the ATP-grasp domain. 173 to 228 (EKQLSYPIFVKPANLGSSVGISKVKNREELIQGIDLAVKYDMKCLAEEFIPGKEIE) provides a ligand contact to ATP. Mg(2+) is bound by residues Asp-299, Glu-313, and Asn-315.

It belongs to the D-alanine--D-alanine ligase family. Requires Mg(2+) as cofactor. Mn(2+) is required as a cofactor.

It localises to the cytoplasm. It catalyses the reaction 2 D-alanine + ATP = D-alanyl-D-alanine + ADP + phosphate + H(+). Its pathway is cell wall biogenesis; peptidoglycan biosynthesis. In terms of biological role, cell wall formation. In Natranaerobius thermophilus (strain ATCC BAA-1301 / DSM 18059 / JW/NM-WN-LF), this protein is D-alanine--D-alanine ligase.